We begin with the raw amino-acid sequence, 254 residues long: MSSEVAARRDAKKLVRSPSGLRMVPEHRAYGSPFGLEEPPWVPDKECPRCMQCDTKFDFLTRKHHCRRCGKCFCDKCCGQKVALRRMCFVDPVRQCAGCAPVSRREADFYDRQLKLLLSGATFLVTFENSEKPDTMVCRLSSNQRFLLLDGDGDGDGHREVEVARIAAVQMLTEGLPPGDTLSHTSLPASRPAAEGGNARAIGMTLQYTTPGAEGLTQLTLTAGEDADGSRRQATAWLAAMHKAAKLLYESRDQ.

Residues 44–104 (DKECPRCMQC…QCAGCAPVSR (61 aa)) form an FYVE-type zinc finger. Cysteine 50, cysteine 53, cysteine 66, cysteine 69, cysteine 74, cysteine 77, cysteine 96, and cysteine 99 together coordinate Zn(2+). The segment at 107–254 (ADFYDRQLKL…AKLLYESRDQ (148 aa)) is PH-like.

In terms of assembly, interacts with PTK2/FAK1.

It is found in the cell junction. Its subcellular location is the focal adhesion. The protein localises to the cytoplasmic vesicle. The protein resides in the endosome. Its function is as follows. Plays a role in cell adhesion, and thereby in cell motility which requires repeated formation and disassembly of focal adhesions. Regulates microtubule-induced PTK2/FAK1 dephosphorylation, an event important for focal adhesion disassembly, as well as integrin beta-1/ITGB1 cell surface expression. The protein is Zinc finger FYVE domain-containing protein 21 (ZFYVE21) of Bos taurus (Bovine).